The sequence spans 313 residues: DNA-directed RNA polymerase subunit alpha (313 aa).

Residues M1 to K229 form an alpha N-terminal domain (alpha-NTD) region. The alpha C-terminal domain (alpha-CTD) stretch occupies residues I243–K313.

It belongs to the RNA polymerase alpha chain family. As to quaternary structure, in plastids the minimal PEP RNA polymerase catalytic core is composed of four subunits: alpha, beta, beta', and beta''. When a (nuclear-encoded) sigma factor is associated with the core the holoenzyme is formed, which can initiate transcription.

The protein resides in the plastid. The protein localises to the chloroplast. The catalysed reaction is RNA(n) + a ribonucleoside 5'-triphosphate = RNA(n+1) + diphosphate. In terms of biological role, DNA-dependent RNA polymerase catalyzes the transcription of DNA into RNA using the four ribonucleoside triphosphates as substrates. The polypeptide is DNA-directed RNA polymerase subunit alpha (Thalassiosira pseudonana (Marine diatom)).